Consider the following 322-residue polypeptide: MIFSTLEHILTHISFSVVSIVITIHLITLLVDEIVGLSDSSEKGMIATFFCITGLLVTRWIYLGHFPLSDLYESLIFLSWSFSIIHIVPYFKKHKNHLSALTAPSAIFTQGFATSGLLTEMHQSEILVPALQSQWLMMHVSMMVLGYAALLCGSLLSVALLVITFRQDIRILCKNNHFLNKSFSFDEIQYMNKGNNVLQNTSFLSVRNYYRAQFIQQLDHWSYRVISLGFLFLTIGILSGAVWANEAWGSYWNWDPKETWAFITWTIFAIYLHTRTNKNLQVANSAIVASMGFLIIWICYFGVNLLGIGLHSYGSFTFSSNL.

The next 8 membrane-spanning stretches (helical) occupy residues 17–37 (VVSI…IVGL), 44–64 (GMIA…IYLG), 71–91 (LYES…VPYF), 98–118 (LSAL…SGLL), 143–163 (MVLG…LLVI), 225–245 (VISL…VWAN), 258–273 (ETWA…IYLH), and 286–306 (AIVA…VNLL).

Belongs to the CcmF/CycK/Ccl1/NrfE/CcsA family. In terms of assembly, may interact with Ccs1.

It is found in the plastid. Its subcellular location is the chloroplast thylakoid membrane. In terms of biological role, required during biogenesis of c-type cytochromes (cytochrome c6 and cytochrome f) at the step of heme attachment. The sequence is that of Cytochrome c biogenesis protein CcsA from Vitis vinifera (Grape).